Reading from the N-terminus, the 191-residue chain is Protein YceI (191 aa).

A signal peptide spans 1–22 (MKKNLLGFTLASLLFTTGSAVA).

This sequence belongs to the UPF0312 family. Type 1 subfamily.

The protein resides in the periplasm. In Salmonella dublin (strain CT_02021853), this protein is Protein YceI.